Reading from the N-terminus, the 84-residue chain is UPF0729 protein F18A11.3 (84 aa).

The helical transmembrane segment at 1-21 threads the bilayer; sequence MVCLPCIFLPIMMAIYMKFIM.

Belongs to the UPF0729 family.

It localises to the cell membrane. This is UPF0729 protein F18A11.3 from Caenorhabditis elegans.